An 86-amino-acid chain; its full sequence is MVVIRMARGGSKKRPFYNLVATDSRNRRDGRFIERVGFYNPVASEGSESLRISLDRVQYWTNSGAQLSPAVERLVKDYSAKVSAAA.

This sequence belongs to the bacterial ribosomal protein bS16 family.

This is Small ribosomal subunit protein bS16 from Bordetella petrii (strain ATCC BAA-461 / DSM 12804 / CCUG 43448).